Reading from the N-terminus, the 320-residue chain is Methionyl-tRNA formyltransferase (320 aa).

111-114 is a binding site for (6S)-5,6,7,8-tetrahydrofolate; sequence SLLP.

Belongs to the Fmt family.

The catalysed reaction is L-methionyl-tRNA(fMet) + (6R)-10-formyltetrahydrofolate = N-formyl-L-methionyl-tRNA(fMet) + (6S)-5,6,7,8-tetrahydrofolate + H(+). Its function is as follows. Attaches a formyl group to the free amino group of methionyl-tRNA(fMet). The formyl group appears to play a dual role in the initiator identity of N-formylmethionyl-tRNA by promoting its recognition by IF2 and preventing the misappropriation of this tRNA by the elongation apparatus. The protein is Methionyl-tRNA formyltransferase of Methylacidiphilum infernorum (isolate V4) (Methylokorus infernorum (strain V4)).